A 543-amino-acid chain; its full sequence is 2-succinyl-5-enolpyruvyl-6-hydroxy-3-cyclohexene-1-carboxylate synthase (543 aa).

This sequence belongs to the TPP enzyme family. MenD subfamily. In terms of assembly, homodimer. Mg(2+) serves as cofactor. The cofactor is Mn(2+). Thiamine diphosphate is required as a cofactor.

It catalyses the reaction isochorismate + 2-oxoglutarate + H(+) = 5-enolpyruvoyl-6-hydroxy-2-succinyl-cyclohex-3-ene-1-carboxylate + CO2. Its pathway is quinol/quinone metabolism; 1,4-dihydroxy-2-naphthoate biosynthesis; 1,4-dihydroxy-2-naphthoate from chorismate: step 2/7. The protein operates within quinol/quinone metabolism; menaquinone biosynthesis. In terms of biological role, catalyzes the thiamine diphosphate-dependent decarboxylation of 2-oxoglutarate and the subsequent addition of the resulting succinic semialdehyde-thiamine pyrophosphate anion to isochorismate to yield 2-succinyl-5-enolpyruvyl-6-hydroxy-3-cyclohexene-1-carboxylate (SEPHCHC). In Corynebacterium glutamicum (strain R), this protein is 2-succinyl-5-enolpyruvyl-6-hydroxy-3-cyclohexene-1-carboxylate synthase.